Reading from the N-terminus, the 144-residue chain is AP-4 complex subunit sigma-1 (144 aa).

The protein belongs to the adaptor complexes small subunit family. In terms of assembly, adaptor protein complex 4 (AP-4) is a heterotetramer composed of two large adaptins (epsilon-type subunit AP4E1 and beta-type subunit AP4B1), a medium adaptin (mu-type subunit AP4M1) and a small adaptin (sigma-type AP4S1).

Its subcellular location is the golgi apparatus. The protein resides in the trans-Golgi network membrane. Component of the adaptor protein complex 4 (AP-4). Adaptor protein complexes are vesicle coat components involved both in vesicle formation and cargo selection. They control the vesicular transport of proteins in different trafficking pathways. AP-4 forms a non clathrin-associated coat on vesicles departing the trans-Golgi network (TGN) and may be involved in the targeting of proteins from the trans-Golgi network (TGN) to the endosomal-lysosomal system. It is also involved in protein sorting to the basolateral membrane in epithelial cells and the proper asymmetric localization of somatodendritic proteins in neurons. AP-4 is involved in the recognition and binding of tyrosine-based sorting signals found in the cytoplasmic part of cargos, but may also recognize other types of sorting signal. The sequence is that of AP-4 complex subunit sigma-1 from Mus musculus (Mouse).